The sequence spans 577 residues: MALQLLLAVFSCVLLLPQPAFGITRHYTLEIKMQNVTRLCHTKSLVSVNGQFPGPKLIAREGDQVLIKVVNQVPNNISLHWHGIRQLRSGWADGPAYITQCPIQTGQSYVYNYTIVGQRGTLWYHAHISWLRSTVYGPLIILPKRGVPYPFAKPHKEVPMIFGEWFNADTEAIIRQATQTGGGPNVSDAYTINGLPGPLYNCSAKDTFRLRVKPGKTYLLRLINAALNDELFFSIANHTVTVVEADAIYVKPFETETILIAPGQTTNVLLKTKSSYPSASFFMTARPYVTGQGTFDNSTVAGILEYEPPKQTKGAHSRTSIKNLQLFKPILPALNDTNFATKFSNKLRSLNSKNFPANVPLNVDRKFFFTVGLGTNPCNHKNNQTCQGPTNTTMFAASISNISFTMPTKALLQSHYSGQSHGVYSPKFPWSPIVPFNYTGTPPNNTMVSNGTNLMVLPYNTSVELVMQDTSILGAESHPLHLHGFNFFVVGQGFGNFDPNKDPRNFNLVDPIERNTVGVPSGGWAAIRFLADNPGVWFMHCHLEVHTSWGLRMAWLVLDGDKPDQKLLPPPADLPKC.

The signal sequence occupies residues 1–22 (MALQLLLAVFSCVLLLPQPAFG). 2 consecutive Plastocyanin-like domains span residues 30-146 (EIKM…PKRG) and 156-309 (KEVP…YEPP). N-linked (GlcNAc...) asparagine glycans are attached at residues Asn-35 and Asn-76. The Cu cation site is built by His-80 and His-82. Asn-112 carries N-linked (GlcNAc...) asparagine glycosylation. The Cu cation site is built by His-125 and His-127. Asn-185, Asn-201, Asn-237, Asn-297, Asn-335, Asn-383, Asn-391, Asn-401, Asn-437, Asn-444, Asn-450, and Asn-460 each carry an N-linked (GlcNAc...) asparagine glycan. Positions 427–561 (KFPWSPIVPF…RMAWLVLDGD (135 aa)) constitute a Plastocyanin-like 3 domain. Cu cation contacts are provided by His-478, His-481, His-483, His-540, Cys-541, His-542, and His-546.

Belongs to the multicopper oxidase family. Cu cation serves as cofactor. Ubiquitous with higher levels in the inflorescence stem.

Its subcellular location is the secreted. The protein resides in the extracellular space. It localises to the apoplast. It carries out the reaction 4 hydroquinone + O2 = 4 benzosemiquinone + 2 H2O. In terms of biological role, lignin degradation and detoxification of lignin-derived products. In Arabidopsis thaliana (Mouse-ear cress), this protein is Laccase-17 (LAC17).